The sequence spans 258 residues: Venom plasminogen activator LV-PA (258 aa).

A signal peptide spans 1-18 (MVLITVLANLLILQLSYA). A propeptide spanning residues 19 to 24 (QKSSKL) is cleaved from the precursor. A Peptidase S1 domain is found at 25–249 (VFGGDECNIN…YTDWIQSIIA (225 aa)). The N-linked (GlcNAc...) asparagine glycan is linked to asparagine 44. Cysteine 50 and cysteine 66 are disulfide-bonded. Catalysis depends on charge relay system residues histidine 65 and aspartate 110. 3 disulfides stabilise this stretch: cysteine 142-cysteine 210, cysteine 174-cysteine 189, and cysteine 200-cysteine 225. Catalysis depends on serine 204, which acts as the Charge relay system.

The protein belongs to the peptidase S1 family. Snake venom subfamily. Monomer. Post-translationally, N-glycosylated. PubMed:17034951 shows that it contains approximately 10% carbohydrates, PubMed:10871053 shows that it contains approximately 20% carbohydrates. As to expression, expressed by the venom gland.

Its subcellular location is the secreted. With respect to regulation, inhibited by the serine protease inhibitors NPGB, PMSF, p-aminobenzamidine and aprotinin. Not inhibited by soybean trypsin inhibitor or EDTA. Snake venom serine protease that activates plasminogen. Weakly hydrolyzes the alpha chain of human fibrinogen without releasing fibrinopeptide A. Does not hydrolyze plasma kallikrein or factor Xa. Does not clot fibrinogen. Does not affect platelet function. Induces hypotensive effects on rats. Shows a preferential cleavage at Lys-|-Xaa over Arg-|-Xaa bonds. The chain is Venom plasminogen activator LV-PA from Lachesis muta muta (Bushmaster).